The following is a 298-amino-acid chain: Probable 3-mercaptopyruvate sulfurtransferase (298 aa).

The Rhodanese 1 domain occupies 24–141; that stretch reads NAQKTVLLDA…WKTEGLELET (118 aa). Residues 142-175 are hinge; it reads GEPRTPKPVVYEGAKLNKDLVASFDDIVKVIESP. S164 is modified (phosphoserine). The 117-residue stretch at 176–292 folds into the Rhodanese 2 domain; that stretch reads DAAGVHIVDA…YGKRANEDSS (117 aa). Position 190 (R190) interacts with substrate. The active-site Cysteine persulfide intermediate is the C252.

It localises to the mitochondrion. It catalyses the reaction 2-oxo-3-sulfanylpropanoate + [thioredoxin]-dithiol = [thioredoxin]-disulfide + hydrogen sulfide + pyruvate + H(+). Required for formation of the 2-thio group of the 5-methoxycarbonylmethyl-2-thiouridine modified base in some tRNAs. This is Probable 3-mercaptopyruvate sulfurtransferase (tum1) from Schizosaccharomyces pombe (strain 972 / ATCC 24843) (Fission yeast).